The following is a 196-amino-acid chain: Large ribosomal subunit protein eL15 (196 aa).

The disordered stretch occupies residues 154–196; sequence PGHRGRSERGLTSAGVKGRGMRRRGKGTEKCRPSVRANANRAK.

Belongs to the eukaryotic ribosomal protein eL15 family.

In Methanospirillum hungatei JF-1 (strain ATCC 27890 / DSM 864 / NBRC 100397 / JF-1), this protein is Large ribosomal subunit protein eL15.